Consider the following 155-residue polypeptide: Histone H2B.5 (155 aa).

2 stretches are compositionally biased toward basic and acidic residues: residues 1-28 (MAPK…EKAP) and 36-54 (EKRL…GKKD). The tract at residues 1–63 (MAPKAEKKPA…DRAGRKKAKK (63 aa)) is disordered. N6-acetyllysine occurs at positions 7 and 37. K151 is covalently cross-linked (Glycyl lysine isopeptide (Lys-Gly) (interchain with G-Cter in ubiquitin)).

Belongs to the histone H2B family. As to quaternary structure, the nucleosome is a histone octamer containing two molecules each of H2A, H2B, H3 and H4 assembled in one H3-H4 heterotetramer and two H2A-H2B heterodimers. The octamer wraps approximately 147 bp of DNA. Can be acetylated to form H2BK6ac and H2BK33ac. In terms of processing, monoubiquitinated by BRE1 to form H2BK143ub1 and deubiquitinated by UBP26. Required for heterochromatic histone H3 di- and trimethylation at H3K4me. May give a specific tag for epigenetic transcriptional activation.

Its subcellular location is the nucleus. It is found in the chromosome. Its function is as follows. Core component of nucleosome. Nucleosomes wrap and compact DNA into chromatin, limiting DNA accessibility to the cellular machineries which require DNA as a template. Histones thereby play a central role in transcription regulation, DNA repair, DNA replication and chromosomal stability. DNA accessibility is regulated via a complex set of post-translational modifications of histones, also called histone code, and nucleosome remodeling. In Oryza sativa subsp. japonica (Rice), this protein is Histone H2B.5 (H2B.5).